The primary structure comprises 437 residues: Adenylosuccinate synthetase (437 aa).

Residues 13-19 (GDEGKGK) and 41-43 (GHT) each bind GTP. The Proton acceptor role is filled by aspartate 14. Mg(2+) contacts are provided by aspartate 14 and glycine 41. Residues 14–17 (DEGK), 39–42 (NAGH), threonine 130, arginine 144, glutamine 225, threonine 240, and arginine 310 each bind IMP. Histidine 42 functions as the Proton donor in the catalytic mechanism. 306 to 312 (ATTGRLR) serves as a coordination point for substrate. Residues arginine 312, 338 to 340 (KLD), and 421 to 423 (STG) contribute to the GTP site.

The protein belongs to the adenylosuccinate synthetase family. Homodimer. Mg(2+) serves as cofactor.

The protein localises to the cytoplasm. It catalyses the reaction IMP + L-aspartate + GTP = N(6)-(1,2-dicarboxyethyl)-AMP + GDP + phosphate + 2 H(+). It participates in purine metabolism; AMP biosynthesis via de novo pathway; AMP from IMP: step 1/2. Its function is as follows. Plays an important role in the de novo pathway of purine nucleotide biosynthesis. Catalyzes the first committed step in the biosynthesis of AMP from IMP. The sequence is that of Adenylosuccinate synthetase from Psychromonas ingrahamii (strain DSM 17664 / CCUG 51855 / 37).